The following is a 230-amino-acid chain: 5'-methylthioadenosine/S-adenosylhomocysteine nucleosidase (230 aa).

Residue Glu-12 is the Proton acceptor of the active site. Substrate contacts are provided by residues Gly-78, Ile-153, and 174 to 175 (ME). The active-site Proton donor is Asp-198.

It belongs to the PNP/UDP phosphorylase family. MtnN subfamily.

It carries out the reaction S-adenosyl-L-homocysteine + H2O = S-(5-deoxy-D-ribos-5-yl)-L-homocysteine + adenine. The catalysed reaction is S-methyl-5'-thioadenosine + H2O = 5-(methylsulfanyl)-D-ribose + adenine. The enzyme catalyses 5'-deoxyadenosine + H2O = 5-deoxy-D-ribose + adenine. It functions in the pathway amino-acid biosynthesis; L-methionine biosynthesis via salvage pathway; S-methyl-5-thio-alpha-D-ribose 1-phosphate from S-methyl-5'-thioadenosine (hydrolase route): step 1/2. Its function is as follows. Catalyzes the irreversible cleavage of the glycosidic bond in both 5'-methylthioadenosine (MTA) and S-adenosylhomocysteine (SAH/AdoHcy) to adenine and the corresponding thioribose, 5'-methylthioribose and S-ribosylhomocysteine, respectively. Also cleaves 5'-deoxyadenosine, a toxic by-product of radical S-adenosylmethionine (SAM) enzymes, into 5-deoxyribose and adenine. This Shewanella piezotolerans (strain WP3 / JCM 13877) protein is 5'-methylthioadenosine/S-adenosylhomocysteine nucleosidase.